Consider the following 238-residue polypeptide: ATP synthase subunit a (238 aa).

The next 5 helical transmembrane spans lie at Leu-16–Phe-36, Gly-79–Val-99, Phe-103–Leu-123, Gly-129–Val-149, and Val-209–Leu-229.

It belongs to the ATPase A chain family. F-type ATPases have 2 components, CF(1) - the catalytic core - and CF(0) - the membrane proton channel. CF(1) has five subunits: alpha(3), beta(3), gamma(1), delta(1), epsilon(1). CF(0) has three main subunits: a, b and c.

It localises to the mitochondrion inner membrane. Mitochondrial membrane ATP synthase (F(1)F(0) ATP synthase or Complex V) produces ATP from ADP in the presence of a proton gradient across the membrane which is generated by electron transport complexes of the respiratory chain. F-type ATPases consist of two structural domains, F(1) - containing the extramembraneous catalytic core and F(0) - containing the membrane proton channel, linked together by a central stalk and a peripheral stalk. During catalysis, ATP synthesis in the catalytic domain of F(1) is coupled via a rotary mechanism of the central stalk subunits to proton translocation. Key component of the proton channel; it may play a direct role in the translocation of protons across the membrane. In Mytilus edulis (Blue mussel), this protein is ATP synthase subunit a (ATP6).